The sequence spans 460 residues: Diguanylate cyclase DosC (460 aa).

A heme-binding site is contributed by H98. The GGDEF domain occupies 325 to 458 (TPLSVLIIDV…GRNRVELWKA (134 aa)). A Mg(2+)-binding site is contributed by D333. 2 residues coordinate substrate: N341 and D350. D376 is a Mg(2+) binding site. D376 functions as the Proton acceptor in the catalytic mechanism.

Heme serves as cofactor. Requires Mg(2+) as cofactor.

It carries out the reaction 2 GTP = 3',3'-c-di-GMP + 2 diphosphate. Its pathway is purine metabolism; 3',5'-cyclic di-GMP biosynthesis. In terms of biological role, globin-coupled heme-based oxygen sensor protein displaying diguanylate cyclase (DGC) activity in response to oxygen availability. Thus, catalyzes the synthesis of cyclic diguanylate (c-di-GMP) via the condensation of 2 GTP molecules. Cyclic-di-GMP is a second messenger which controls cell surface-associated traits in bacteria. The protein is Diguanylate cyclase DosC (dosC) of Shigella boydii serotype 4 (strain Sb227).